The primary structure comprises 157 residues: Endoribonuclease YbeY (157 aa).

Zn(2+) contacts are provided by histidine 122, histidine 126, and histidine 132.

The protein belongs to the endoribonuclease YbeY family. Zn(2+) serves as cofactor.

The protein localises to the cytoplasm. Functionally, single strand-specific metallo-endoribonuclease involved in late-stage 70S ribosome quality control and in maturation of the 3' terminus of the 16S rRNA. The protein is Endoribonuclease YbeY of Bacillus subtilis (strain 168).